The chain runs to 716 residues: Amino-acid acetyltransferase, mitochondrial (716 aa).

A mitochondrion-targeting transit peptide spans 1-44 (MSPHTGWPRTVNSSLLKKHRSSLCTCQHTSSFLPRSFSTTADRH). Disordered stretches follow at residues 99 to 119 (YPKS…APTL) and 487 to 508 (LSSS…TVYP). Positions 102–112 (SPDENKPEPEK) are enriched in basic and acidic residues. Positions 497-508 (GPTNNGQGTVYP) are enriched in polar residues. In terms of domain architecture, N-acetyltransferase spans 537–706 (SRPRLKLDDP…YEAVCRSTQP (170 aa)).

This sequence belongs to the acetyltransferase family.

The protein resides in the mitochondrion. The enzyme catalyses L-glutamate + acetyl-CoA = N-acetyl-L-glutamate + CoA + H(+). It participates in amino-acid biosynthesis; L-arginine biosynthesis; N(2)-acetyl-L-ornithine from L-glutamate: step 1/4. Functionally, N-acetylglutamate synthase involved in arginine biosynthesis. The polypeptide is Amino-acid acetyltransferase, mitochondrial (arg2) (Neosartorya fischeri (strain ATCC 1020 / DSM 3700 / CBS 544.65 / FGSC A1164 / JCM 1740 / NRRL 181 / WB 181) (Aspergillus fischerianus)).